The sequence spans 124 residues: Glycine cleavage system H protein (124 aa).

Residues lysine 22 to glutamate 104 enclose the Lipoyl-binding domain. Lysine 63 is modified (N6-lipoyllysine).

The protein belongs to the GcvH family. As to quaternary structure, the glycine cleavage system is composed of four proteins: P, T, L and H. (R)-lipoate is required as a cofactor.

In terms of biological role, the glycine cleavage system catalyzes the degradation of glycine. The H protein shuttles the methylamine group of glycine from the P protein to the T protein. The protein is Glycine cleavage system H protein of Endomicrobium trichonymphae.